The following is a 129-amino-acid chain: MAELIQKKLQGEVEKYQQLQKDLSKSMSGRQKLEAQLTENNIVKEELALLDGSNVVFKLLGPVLVKQELGEARATVGKRLDYITAEIKRYESQLRDLERQSEQQRETLAQLQQEFQRAQAAKAGASGKA.

Residue Ala-2 is modified to N-acetylalanine. An N6-acetyllysine modification is found at Lys-21. Position 66 is an N6-acetyllysine; alternate (Lys-66). Residue Lys-66 forms a Glycyl lysine isopeptide (Lys-Gly) (interchain with G-Cter in SUMO1); alternate linkage. Lys-66 is covalently cross-linked (Glycyl lysine isopeptide (Lys-Gly) (interchain with G-Cter in SUMO2); alternate).

The protein belongs to the prefoldin subunit beta family. As to quaternary structure, heterohexamer of two PFD-alpha type and four PFD-beta type subunits. Component of the PAQosome complex which is responsible for the biogenesis of several protein complexes and which consists of R2TP complex members RUVBL1, RUVBL2, RPAP3 and PIH1D1, URI complex members PFDN2, PFDN6, PDRG1, UXT and URI1 as well as ASDURF, POLR2E and DNAAF10/WDR92.

Its function is as follows. Binds specifically to cytosolic chaperonin (c-CPN) and transfers target proteins to it. Binds to nascent polypeptide chain and promotes folding in an environment in which there are many competing pathways for nonnative proteins. In Canis lupus familiaris (Dog), this protein is Prefoldin subunit 6 (PFDN6).